The chain runs to 281 residues: Elongation factor Ts (281 aa).

The segment at 80–83 is involved in Mg(2+) ion dislocation from EF-Tu; the sequence is TDFV.

It belongs to the EF-Ts family.

The protein resides in the cytoplasm. Its function is as follows. Associates with the EF-Tu.GDP complex and induces the exchange of GDP to GTP. It remains bound to the aminoacyl-tRNA.EF-Tu.GTP complex up to the GTP hydrolysis stage on the ribosome. This is Elongation factor Ts from Vibrio parahaemolyticus serotype O3:K6 (strain RIMD 2210633).